Reading from the N-terminus, the 167-residue chain is Leukotoxin-activating lysine-acyltransferase LktC serotype T3 (167 aa).

Catalysis depends on residues histidine 22 and aspartate 91.

This sequence belongs to the RTX toxin acyltransferase family.

The protein localises to the cytoplasm. It carries out the reaction a fatty acyl-[ACP] + L-lysyl-[protein] = N(6)-(fatty acyl)-L-lysyl-[protein] + holo-[ACP] + H(+). Involved in fatty acylation of the protoxin (LktA) at two internal lysine residues, thereby converting it to the active toxin. The chain is Leukotoxin-activating lysine-acyltransferase LktC serotype T3 (lktC) from Mannheimia haemolytica (Pasteurella haemolytica).